A 270-amino-acid chain; its full sequence is MTATPETATNRGVQRLHAAFARAEAEGRAAFIPFMTGGYPDAARFGEVAGDLLARADIMEVGIPYSDPLGDGPTIQRASEQALAGGTSTRRTLELVRELRQKDDTPIVIMTYINPIYAVGPAEFMRLAQEAGVDGLILPDLPPDQDLEIADLAAQHGLAVTFLIAPTSTPERVKLVAEACTGFLYAVSVTGVTGAREGAALGEVPRMLDLARQYAQRPVVVGFGVKDAATAQQVAQVADGVVVGSAFINAVAAGRDVGALADELAAGCRR.

Catalysis depends on proton acceptor residues E60 and D71.

The protein belongs to the TrpA family. Tetramer of two alpha and two beta chains.

It carries out the reaction (1S,2R)-1-C-(indol-3-yl)glycerol 3-phosphate + L-serine = D-glyceraldehyde 3-phosphate + L-tryptophan + H2O. Its pathway is amino-acid biosynthesis; L-tryptophan biosynthesis; L-tryptophan from chorismate: step 5/5. The alpha subunit is responsible for the aldol cleavage of indoleglycerol phosphate to indole and glyceraldehyde 3-phosphate. This chain is Tryptophan synthase alpha chain, found in Deinococcus radiodurans (strain ATCC 13939 / DSM 20539 / JCM 16871 / CCUG 27074 / LMG 4051 / NBRC 15346 / NCIMB 9279 / VKM B-1422 / R1).